The sequence spans 178 residues: FMN reductase (NADH) RutF (178 aa).

Belongs to the non-flavoprotein flavin reductase family. RutF subfamily.

It carries out the reaction FMNH2 + NAD(+) = FMN + NADH + 2 H(+). In terms of biological role, catalyzes the reduction of FMN to FMNH2 which is used to reduce pyrimidine by RutA via the Rut pathway. The polypeptide is FMN reductase (NADH) RutF (Pseudomonas syringae pv. syringae (strain B728a)).